A 151-amino-acid polypeptide reads, in one-letter code: Troponin C, isoallergen Bla g 6.0101 (151 aa).

EF-hand domains lie at 7 to 42, 43 to 78, 83 to 118, and 119 to 151; these read EQIQ…LGHR, LDDD…FLVE, AMQQ…LDDK, and ITAE…MTGE. Residues D56, D58, S60, E62, and E67 each coordinate Ca(2+). Ca(2+) contacts are provided by D132, D134, S136, T138, and E143.

This sequence belongs to the troponin C family.

In terms of biological role, troponin is the central regulatory protein of striated muscle contraction. It consists of three components: Troponin-I (Tn-I) which is the inhibitor of actomyosin ATPase, Troponin-T (Tn-T) which contains the binding site for tropomyosin and Troponin-C (Tn-C). The binding of calcium to Tn-C abolishes the inhibitory action of Tn on actin filaments. The sequence is that of Troponin C, isoallergen Bla g 6.0101 from Blattella germanica (German cockroach).